The sequence spans 284 residues: 4-diphosphocytidyl-2-C-methyl-D-erythritol kinase (284 aa).

Lys14 is a catalytic residue. 98–108 (PMGGGLGGGSS) lines the ATP pocket. Residue Asp140 is part of the active site.

Belongs to the GHMP kinase family. IspE subfamily.

It carries out the reaction 4-CDP-2-C-methyl-D-erythritol + ATP = 4-CDP-2-C-methyl-D-erythritol 2-phosphate + ADP + H(+). It functions in the pathway isoprenoid biosynthesis; isopentenyl diphosphate biosynthesis via DXP pathway; isopentenyl diphosphate from 1-deoxy-D-xylulose 5-phosphate: step 3/6. In terms of biological role, catalyzes the phosphorylation of the position 2 hydroxy group of 4-diphosphocytidyl-2C-methyl-D-erythritol. This is 4-diphosphocytidyl-2-C-methyl-D-erythritol kinase from Shewanella sp. (strain ANA-3).